Consider the following 260-residue polypeptide: MLNPFQLLFYSQLLASLTYFIGAAIYALPVPVYGVKKWAPRLITDSIYVVVWNSIYLGVLLFLGELLSLLGVTWDGYFSWLNNILYIEQSLYLMVKTILTASNAVPEVSALIQVVPFGALLTVITSALTFTSTLIAVSKIVYQYVAVFIATGVLFLSIPFRIGRSVGGAFIGSGIVFYVGLPYLPQFLAAFQMLPTQELNTPPQNASAIIDYYVHVVPSIITSLVIGPVIYIFILVGFSMGVASLVSGYGSRLPLIIDVF.

The next 6 membrane-spanning stretches (helical) occupy residues 13 to 33, 47 to 67, 110 to 130, 140 to 160, 169 to 189, and 220 to 240; these read LLAS…VPVY, IYVV…GELL, ALIQ…ALTF, IVYQ…SIPF, AFIG…QFLA, and IITS…GFSM.

As to quaternary structure, forms a complex composed of CedA, CedA1 and CedA2.

The protein resides in the cell membrane. Functionally, part of the Ced system, which is involved in DNA import. This is DNA import protein CedA from Sulfolobus acidocaldarius (strain ATCC 33909 / DSM 639 / JCM 8929 / NBRC 15157 / NCIMB 11770).